The following is a 1188-amino-acid chain: NF-X1-type zinc finger protein NFXL1 (1188 aa).

Residues 1-15 (MSFQVRRDRSDDRSH) are compositionally biased toward basic and acidic residues. 2 disordered regions span residues 1 to 52 (MSFQ…ETLD) and 65 to 195 (QHNA…VAKE). 2 stretches are compositionally biased toward polar residues: residues 19–34 (HQQTWIPRNSSTSSVV) and 168–186 (ASGTLPDNRQRVASRTRPV). An RING-type; degenerate zinc finger spans residues 223–279 (CMICYDKVGRSANIWSCSSCYSIFHINCIKRWARAPTSVDLLAEKNQGDNWRCPGCQ). 9 NF-X1-type zinc fingers span residues 335-353 (CPHVCVLQCHPGPCPPCKA), 390-409 (CGRHQCERTCHVGPCDPCQV), 454-473 (CGNHFCSEVCHPGPCGDCDL), 513-532 (CRLHTCNEMCHAGDCPPCLV), 572-607 (CGRHRCSERCCPLLNGKKNDLSGDWDPHVCQIPCQK), 611-630 (CGQHSCESLCHSGHCPPCLE), 668-686 (CGHSDTHGCHFGDCPPCST), 721-751 (CGMHACARTCHPEPCDSFNESEAGMRVTCRQ), and 760-781 (CRHTCAALCHPSAPCPDLRCEF). Residues 894–963 (PKWVLAVEER…KRFTVVHVTA (70 aa)) enclose the R3H domain. A disordered region spans residues 1100–1188 (SDDSWGAEDS…VVDDWEKVCE (89 aa)). 2 stretches are compositionally biased toward polar residues: residues 1126–1138 (AKSNSPIVTSVNR) and 1159–1169 (EESSSSKTTGK).

This sequence belongs to the NFX1 family. As to expression, expressed in seedlings, roots, stems, leaves, buds, flowers and siliques.

It is found in the nucleus. Its pathway is protein modification; protein ubiquitination. Its function is as follows. Mediates E2-dependent ubiquitination. Confers resistance to osmotic stress such as high salinity. Promotes H(2)O(2) production. Negative regulator of some defense-related genes via an salicylic acid (SA)-dependent signaling pathway. Confers susceptibility to the compatible phytopathogen Pseudomonas syringae pv. tomato strain DC3000 (Pst DC3000). Mediates resistance to type A trichothecenes (phytotoxins produced by phytopathogenic fungi). The polypeptide is NF-X1-type zinc finger protein NFXL1 (NFXL1) (Arabidopsis thaliana (Mouse-ear cress)).